The chain runs to 43 residues: Metallothionein-2 (43 aa).

Met1 carries the blocked amino end (Met) modification.

Belongs to the metallothionein superfamily. Type 5 family.

Its function is as follows. This protein binds cations of several transition elements. Thought to be involved in metal ion homeostasis. The sequence is that of Metallothionein-2 (MtnB) from Drosophila melanogaster (Fruit fly).